The following is a 166-amino-acid chain: Disulfide bond formation protein B (166 aa).

At 1–11 (MCNKLFAGRRG) the chain is on the cytoplasmic side. Residues 12 to 28 (YFLGFVASFGLVGLALF) form a helical membrane-spanning segment. The Periplasmic segment spans residues 29–46 (LQQKYNLEPCPLCISQRI). Cys38 and Cys41 are joined by a disulfide. Residues 47–63 (AFMALGILFLLAALHNP) traverse the membrane as a helical segment. Over 64-69 (GRVGRK) the chain is Cytoplasmic. The chain crosses the membrane as a helical span at residues 70 to 87 (VYGLLHVIAAATGIGIAA). Residues 88-144 (RHIWIQANPDKVMAECGAGFDYIMETFPLKKALDLIFKGTGECSAIDWTLFGLTIPQ) are Periplasmic-facing. Cys103 and Cys130 are oxidised to a cystine. A helical transmembrane segment spans residues 145 to 163 (LSLIAFVGLGLFAVLLAFH). The Cytoplasmic portion of the chain corresponds to 164 to 166 (KKA).

It belongs to the DsbB family.

The protein localises to the cell inner membrane. In terms of biological role, required for disulfide bond formation in some periplasmic proteins. Acts by oxidizing the DsbA protein. The sequence is that of Disulfide bond formation protein B from Methylobacillus flagellatus (strain ATCC 51484 / DSM 6875 / VKM B-1610 / KT).